The sequence spans 417 residues: Lipoyl synthase, mitochondrial (417 aa).

The tract at residues 35-56 is disordered; it reads EANPTDLAGLKRKAKRRPTKLA. Residues 44-53 are compositionally biased toward basic residues; it reads LKRKAKRRPT. The [4Fe-4S] cluster site is built by Cys-122, Cys-127, Cys-133, Cys-152, Cys-156, Cys-159, and Ser-367. The Radical SAM core domain maps to 137–356; sequence KKSEATATIM…RDKALEMGFL (220 aa). Positions 389-417 are disordered; the sequence is IEEQQHDKENNNLLLSKEDEKTTQEKANF. The span at 391 to 417 shows a compositional bias: basic and acidic residues; sequence EQQHDKENNNLLLSKEDEKTTQEKANF.

Belongs to the radical SAM superfamily. Lipoyl synthase family. It depends on [4Fe-4S] cluster as a cofactor.

It is found in the mitochondrion. The enzyme catalyses [[Fe-S] cluster scaffold protein carrying a second [4Fe-4S](2+) cluster] + N(6)-octanoyl-L-lysyl-[protein] + 2 oxidized [2Fe-2S]-[ferredoxin] + 2 S-adenosyl-L-methionine + 4 H(+) = [[Fe-S] cluster scaffold protein] + N(6)-[(R)-dihydrolipoyl]-L-lysyl-[protein] + 4 Fe(3+) + 2 hydrogen sulfide + 2 5'-deoxyadenosine + 2 L-methionine + 2 reduced [2Fe-2S]-[ferredoxin]. It participates in protein modification; protein lipoylation via endogenous pathway; protein N(6)-(lipoyl)lysine from octanoyl-[acyl-carrier-protein]: step 2/2. Its function is as follows. Catalyzes the radical-mediated insertion of two sulfur atoms into the C-6 and C-8 positions of the octanoyl moiety bound to the lipoyl domains of lipoate-dependent enzymes, thereby converting the octanoylated domains into lipoylated derivatives. The protein is Lipoyl synthase, mitochondrial of Komagataella phaffii (strain GS115 / ATCC 20864) (Yeast).